The chain runs to 363 residues: Aminomethyltransferase (363 aa).

Belongs to the GcvT family. In terms of assembly, the glycine cleavage system is composed of four proteins: P, T, L and H.

The enzyme catalyses N(6)-[(R)-S(8)-aminomethyldihydrolipoyl]-L-lysyl-[protein] + (6S)-5,6,7,8-tetrahydrofolate = N(6)-[(R)-dihydrolipoyl]-L-lysyl-[protein] + (6R)-5,10-methylene-5,6,7,8-tetrahydrofolate + NH4(+). Functionally, the glycine cleavage system catalyzes the degradation of glycine. This is Aminomethyltransferase from Saccharophagus degradans (strain 2-40 / ATCC 43961 / DSM 17024).